Here is a 459-residue protein sequence, read N- to C-terminus: Bifunctional protein GlmU (459 aa).

The segment at 1 to 229 (MSNFAIXLAA…FDESLGVNDR (229 aa)) is pyrophosphorylase. UDP-N-acetyl-alpha-D-glucosamine contacts are provided by residues 8-11 (LAAG), Lys22, Gln72, and 77-78 (GT). Residue Asp102 participates in Mg(2+) binding. Gly139, Glu154, Asn169, and Asn227 together coordinate UDP-N-acetyl-alpha-D-glucosamine. A Mg(2+)-binding site is contributed by Asn227. Positions 230-250 (VALATAESVMRRRINHKHMVN) are linker. The N-acetyltransferase stretch occupies residues 251–459 (GVSFVNPEAT…TRLPHHPKNQ (209 aa)). Positions 332 and 350 each coordinate UDP-N-acetyl-alpha-D-glucosamine. The active-site Proton acceptor is the His362. UDP-N-acetyl-alpha-D-glucosamine contacts are provided by Tyr365 and Asn376. Residues Ala379, 385–386 (NY), Ser404, Ala422, and Arg439 contribute to the acetyl-CoA site.

This sequence in the N-terminal section; belongs to the N-acetylglucosamine-1-phosphate uridyltransferase family. It in the C-terminal section; belongs to the transferase hexapeptide repeat family. In terms of assembly, homotrimer. Mg(2+) is required as a cofactor.

The protein localises to the cytoplasm. It catalyses the reaction alpha-D-glucosamine 1-phosphate + acetyl-CoA = N-acetyl-alpha-D-glucosamine 1-phosphate + CoA + H(+). The enzyme catalyses N-acetyl-alpha-D-glucosamine 1-phosphate + UTP + H(+) = UDP-N-acetyl-alpha-D-glucosamine + diphosphate. It functions in the pathway nucleotide-sugar biosynthesis; UDP-N-acetyl-alpha-D-glucosamine biosynthesis; N-acetyl-alpha-D-glucosamine 1-phosphate from alpha-D-glucosamine 6-phosphate (route II): step 2/2. Its pathway is nucleotide-sugar biosynthesis; UDP-N-acetyl-alpha-D-glucosamine biosynthesis; UDP-N-acetyl-alpha-D-glucosamine from N-acetyl-alpha-D-glucosamine 1-phosphate: step 1/1. The protein operates within bacterial outer membrane biogenesis; LPS lipid A biosynthesis. Its function is as follows. Catalyzes the last two sequential reactions in the de novo biosynthetic pathway for UDP-N-acetylglucosamine (UDP-GlcNAc). The C-terminal domain catalyzes the transfer of acetyl group from acetyl coenzyme A to glucosamine-1-phosphate (GlcN-1-P) to produce N-acetylglucosamine-1-phosphate (GlcNAc-1-P), which is converted into UDP-GlcNAc by the transfer of uridine 5-monophosphate (from uridine 5-triphosphate), a reaction catalyzed by the N-terminal domain. The protein is Bifunctional protein GlmU of Streptococcus pneumoniae serotype 19F (strain G54).